The following is a 306-amino-acid chain: Serine/threonine-protein phosphatase 2A catalytic subunit A (306 aa).

Asp-54, His-56, Asp-82, and Asn-114 together coordinate Mn(2+). Residue His-115 is the Proton donor of the active site. Mn(2+) is bound by residues His-164 and His-238. Leu-306 is subject to Leucine methyl ester.

The protein belongs to the PPP phosphatase family. PP-2A subfamily. As to quaternary structure, PP2A consists of a trimeric holoenzyme, composed of a 37 kDa catalytic subunit (C subunit) and a 65 kDa constant regulatory subunit (A subunit), that associates with a variety of regulatory subunits (B subunit) such as phr2AB (B55) and psrA (B56 homolog). The trimer may partially dissociates into a core 'AC' dimer equally active compared to the trimer. Mn(2+) is required as a cofactor. In terms of processing, reversibly methyl esterified on Leu-306 by leucine carboxyl methyltransferase 1 (LCMT) and protein phosphatase methylesterase 1 (PPME1). Carboxyl methylation influences the affinity of the catalytic subunit for the different regulatory subunits, thereby modulating the PP2A holoenzyme's substrate specificity, enzyme activity and cellular localization.

Its subcellular location is the cytoplasm. The protein localises to the cytosol. It is found in the nucleus speckle. It carries out the reaction O-phospho-L-seryl-[protein] + H2O = L-seryl-[protein] + phosphate. The catalysed reaction is O-phospho-L-threonyl-[protein] + H2O = L-threonyl-[protein] + phosphate. In terms of biological role, plays a role in activating the myosin contractile function. Dephosphorylates threonine at 'Thr-1823', 'Thr-1833' and 'Thr-2029' in the C-terminal tail region of myosin II heavy chain (mhcA). Drives the assembly of dephosphorylated myosin II filaments to allow myosin recruitment into the cytoskeleton. The protein is Serine/threonine-protein phosphatase 2A catalytic subunit A (pho2a) of Dictyostelium discoideum (Social amoeba).